Reading from the N-terminus, the 542-residue chain is T-complex protein 1 subunit delta (542 aa).

Over residues 1-16 (MPENVAPRTGPPAGAA) the composition is skewed to low complexity. The tract at residues 1–31 (MPENVAPRTGPPAGAAGAAGGRGKSAYQDRD) is disordered. Arginine 22 bears the Omega-N-methylarginine mark. Lysine 24 carries the post-translational modification N6-acetyllysine. Serine 39 carries the post-translational modification Phosphoserine. An ADP-binding site is contributed by glycine 56. ATP is bound at residue glycine 56. Aspartate 107 contributes to the Mg(2+) binding site. The ADP site is built by glycine 108, threonine 109, threonine 110, serine 111, asparagine 175, serine 176, and lysine 177. ATP-binding residues include glycine 108 and threonine 109. Lysine 177 lines the ATP pocket. Phosphoserine is present on residues serine 187 and serine 205. N6-acetyllysine is present on residues lysine 291, lysine 305, lysine 322, and lysine 329. Position 428 (glycine 428) interacts with ADP. Serine 447 is modified (phosphoserine). Position 513 (glutamine 513) interacts with ADP.

This sequence belongs to the TCP-1 chaperonin family. In terms of assembly, component of the chaperonin-containing T-complex (TRiC), a hexadecamer composed of two identical back-to-back stacked rings enclosing a protein folding chamber. Each ring is made up of eight different subunits: TCP1/CCT1, CCT2, CCT3, CCT4, CCT5, CCT6A/CCT6, CCT7, CCT8. Interacts with PACRG. Interacts with DNAAF4. Interacts with DLEC1.

The protein localises to the cytoplasm. It is found in the melanosome. It localises to the cytoskeleton. Its subcellular location is the microtubule organizing center. The protein resides in the centrosome. The protein localises to the cilium basal body. The catalysed reaction is ATP + H2O = ADP + phosphate + H(+). In terms of biological role, component of the chaperonin-containing T-complex (TRiC), a molecular chaperone complex that assists the folding of actin, tubulin and other proteins upon ATP hydrolysis. The TRiC complex mediates the folding of WRAP53/TCAB1, thereby regulating telomere maintenance. As part of the TRiC complex may play a role in the assembly of BBSome, a complex involved in ciliogenesis regulating transports vesicles to the cilia. This is T-complex protein 1 subunit delta (CCT4) from Bos taurus (Bovine).